A 476-amino-acid polypeptide reads, in one-letter code: Argininosuccinate lyase (476 aa).

The protein belongs to the lyase 1 family. Argininosuccinate lyase subfamily.

The protein localises to the cytoplasm. The catalysed reaction is 2-(N(omega)-L-arginino)succinate = fumarate + L-arginine. Its pathway is amino-acid biosynthesis; L-arginine biosynthesis; L-arginine from L-ornithine and carbamoyl phosphate: step 3/3. In Nitrosospira multiformis (strain ATCC 25196 / NCIMB 11849 / C 71), this protein is Argininosuccinate lyase.